Consider the following 872-residue polypeptide: Alanine--tRNA ligase (872 aa).

The Zn(2+) site is built by histidine 561, histidine 565, cysteine 662, and histidine 666.

Belongs to the class-II aminoacyl-tRNA synthetase family. Zn(2+) is required as a cofactor.

Its subcellular location is the cytoplasm. The enzyme catalyses tRNA(Ala) + L-alanine + ATP = L-alanyl-tRNA(Ala) + AMP + diphosphate. Catalyzes the attachment of alanine to tRNA(Ala) in a two-step reaction: alanine is first activated by ATP to form Ala-AMP and then transferred to the acceptor end of tRNA(Ala). Also edits incorrectly charged Ser-tRNA(Ala) and Gly-tRNA(Ala) via its editing domain. This Thiobacillus denitrificans (strain ATCC 25259 / T1) protein is Alanine--tRNA ligase.